A 336-amino-acid chain; its full sequence is Protein FPV127 (336 aa).

The segment at 1–22 (MGGGLVLPTRDPPKEQDTSETA) is disordered.

Belongs to the poxviruses A16/G9/J5 family.

This chain is Protein FPV127, found in Vertebrata (FPV).